Reading from the N-terminus, the 43-residue chain is Protein PsbN (43 aa).

Residues 7 to 27 (LSIGIAVVVIAVTGFSIYTAF) traverse the membrane as a helical segment.

Belongs to the PsbN family.

It localises to the cellular thylakoid membrane. Its function is as follows. May play a role in photosystem I and II biogenesis. The sequence is that of Protein PsbN from Picosynechococcus sp. (strain ATCC 27264 / PCC 7002 / PR-6) (Agmenellum quadruplicatum).